The primary structure comprises 355 residues: Chorismate synthase (355 aa).

Arg-48 contributes to the NADP(+) binding site. Residues 125-127 (RSS), 239-240 (NA), Gly-280, 295-299 (KPVAT), and Arg-321 contribute to the FMN site.

This sequence belongs to the chorismate synthase family. As to quaternary structure, homotetramer. The cofactor is FMNH2.

It catalyses the reaction 5-O-(1-carboxyvinyl)-3-phosphoshikimate = chorismate + phosphate. Its pathway is metabolic intermediate biosynthesis; chorismate biosynthesis; chorismate from D-erythrose 4-phosphate and phosphoenolpyruvate: step 7/7. In terms of biological role, catalyzes the anti-1,4-elimination of the C-3 phosphate and the C-6 proR hydrogen from 5-enolpyruvylshikimate-3-phosphate (EPSP) to yield chorismate, which is the branch point compound that serves as the starting substrate for the three terminal pathways of aromatic amino acid biosynthesis. This reaction introduces a second double bond into the aromatic ring system. In Flavobacterium psychrophilum (strain ATCC 49511 / DSM 21280 / CIP 103535 / JIP02/86), this protein is Chorismate synthase.